Reading from the N-terminus, the 147-residue chain is D-aminoacyl-tRNA deacylase (147 aa).

The Gly-cisPro motif, important for rejection of L-amino acids signature appears at 137–138 (GP).

This sequence belongs to the DTD family. As to quaternary structure, homodimer.

The protein localises to the cytoplasm. It catalyses the reaction glycyl-tRNA(Ala) + H2O = tRNA(Ala) + glycine + H(+). It carries out the reaction a D-aminoacyl-tRNA + H2O = a tRNA + a D-alpha-amino acid + H(+). An aminoacyl-tRNA editing enzyme that deacylates mischarged D-aminoacyl-tRNAs. Also deacylates mischarged glycyl-tRNA(Ala), protecting cells against glycine mischarging by AlaRS. Acts via tRNA-based rather than protein-based catalysis; rejects L-amino acids rather than detecting D-amino acids in the active site. By recycling D-aminoacyl-tRNA to D-amino acids and free tRNA molecules, this enzyme counteracts the toxicity associated with the formation of D-aminoacyl-tRNA entities in vivo and helps enforce protein L-homochirality. This chain is D-aminoacyl-tRNA deacylase, found in Acinetobacter baumannii (strain ATCC 17978 / DSM 105126 / CIP 53.77 / LMG 1025 / NCDC KC755 / 5377).